Consider the following 694-residue polypeptide: Elongation factor G (694 aa).

One can recognise a tr-type G domain in the interval 8–287 (EDYRNFGIMA…AVVEFLPAPT (280 aa)). Residues 17-24 (AHIDAGKT), 86-90 (DTPGH), and 140-143 (NKMD) contribute to the GTP site.

This sequence belongs to the TRAFAC class translation factor GTPase superfamily. Classic translation factor GTPase family. EF-G/EF-2 subfamily.

It localises to the cytoplasm. In terms of biological role, catalyzes the GTP-dependent ribosomal translocation step during translation elongation. During this step, the ribosome changes from the pre-translocational (PRE) to the post-translocational (POST) state as the newly formed A-site-bound peptidyl-tRNA and P-site-bound deacylated tRNA move to the P and E sites, respectively. Catalyzes the coordinated movement of the two tRNA molecules, the mRNA and conformational changes in the ribosome. The sequence is that of Elongation factor G from Brucella abortus (strain S19).